Consider the following 125-residue polypeptide: Large ribosomal subunit protein bL17 (125 aa).

It belongs to the bacterial ribosomal protein bL17 family. Part of the 50S ribosomal subunit. Contacts protein L32.

This is Large ribosomal subunit protein bL17 from Acinetobacter baumannii (strain AB307-0294).